Consider the following 327-residue polypeptide: GTPase Obg (327 aa).

The 159-residue stretch at 1–159 (MQFIDQANII…WEVQLELKLL (159 aa)) folds into the Obg domain. One can recognise an OBG-type G domain in the interval 160–327 (AEVGIIGLPN…SLLSEVWKRI (168 aa)). Residues 166–173 (GLPNAGKS), 191–195 (FTTLI), 213–216 (DIPG), 280–283 (NKIE), and 309–311 (SSS) each bind ATP. S173 and T193 together coordinate Mg(2+).

This sequence belongs to the TRAFAC class OBG-HflX-like GTPase superfamily. OBG GTPase family. Monomer. The cofactor is Mg(2+).

It is found in the cytoplasm. An essential GTPase which binds GTP, GDP and possibly (p)ppGpp with moderate affinity, with high nucleotide exchange rates and a fairly low GTP hydrolysis rate. Plays a role in control of the cell cycle, stress response, ribosome biogenesis and in those bacteria that undergo differentiation, in morphogenesis control. The protein is GTPase Obg of Prochlorococcus marinus (strain AS9601).